The following is a 404-amino-acid chain: Glucose-1-phosphate adenylyltransferase (404 aa).

Alpha-D-glucose 1-phosphate contacts are provided by residues Tyr-99, Gly-164, 179 to 180, and Ser-197; that span reads EK.

This sequence belongs to the bacterial/plant glucose-1-phosphate adenylyltransferase family. Homotetramer.

The enzyme catalyses alpha-D-glucose 1-phosphate + ATP + H(+) = ADP-alpha-D-glucose + diphosphate. It functions in the pathway glycan biosynthesis; glycogen biosynthesis. Involved in the biosynthesis of ADP-glucose, a building block required for the elongation reactions to produce glycogen. Catalyzes the reaction between ATP and alpha-D-glucose 1-phosphate (G1P) to produce pyrophosphate and ADP-Glc. In Rhodococcus jostii (strain RHA1), this protein is Glucose-1-phosphate adenylyltransferase.